We begin with the raw amino-acid sequence, 276 residues long: Secretagogin (276 aa).

EF-hand domains lie at 12–47 (LDAA…MLMK), 58–93 (NLHK…EDEN), 105–140 (DSSV…LFLH), 149–184 (KLEE…QENF), 197–232 (ERKR…MMEL), and 240–276 (VDLD…KINP). Ca(2+) is bound by residues D25, D27, Y31, E36, D71, S73, D75, R77, E82, D118, D120, S122, E129, D162, N164, D166, R168, D173, D210, S212, T214, E221, D254, N256, D258, K260, and E265.

Expressed at high levels in the pancreatic islets of Langerhans and to a much lesser extent in the gastrointestinal tract (stomach, small intestine and colon), the adrenal medulla and cortex and the thyroid C-cells. In the brain, the expression is restricted to distinct subtypes of neurons with highest expression in the molecular layer of the cerebellum (stellate and basket cells), in the anterior part of the pituitary gland, in the thalamus, in the hypothalamus and in a subgroup of neocortical neurons.

It is found in the cytoplasm. It localises to the secreted. The protein resides in the cytoplasmic vesicle. Its subcellular location is the secretory vesicle membrane. In Homo sapiens (Human), this protein is Secretagogin (SCGN).